A 438-amino-acid polypeptide reads, in one-letter code: Serine--tRNA ligase (438 aa).

L-serine is bound at residue threonine 245–glutamate 247. Position 276 to 278 (arginine 276 to glutamate 278) interacts with ATP. L-serine is bound at residue glutamate 299. Glutamate 363–serine 366 lines the ATP pocket. An L-serine-binding site is contributed by serine 398.

The protein belongs to the class-II aminoacyl-tRNA synthetase family. Type-1 seryl-tRNA synthetase subfamily. In terms of assembly, homodimer. The tRNA molecule binds across the dimer.

It localises to the cytoplasm. The enzyme catalyses tRNA(Ser) + L-serine + ATP = L-seryl-tRNA(Ser) + AMP + diphosphate + H(+). It carries out the reaction tRNA(Sec) + L-serine + ATP = L-seryl-tRNA(Sec) + AMP + diphosphate + H(+). It functions in the pathway aminoacyl-tRNA biosynthesis; selenocysteinyl-tRNA(Sec) biosynthesis; L-seryl-tRNA(Sec) from L-serine and tRNA(Sec): step 1/1. Catalyzes the attachment of serine to tRNA(Ser). Is also able to aminoacylate tRNA(Sec) with serine, to form the misacylated tRNA L-seryl-tRNA(Sec), which will be further converted into selenocysteinyl-tRNA(Sec). The sequence is that of Serine--tRNA ligase from Delftia acidovorans (strain DSM 14801 / SPH-1).